The sequence spans 287 residues: Nucleotide-binding protein Hhal_2130 (287 aa).

G11 to S18 provides a ligand contact to ATP. Residue D63–N66 coordinates GTP.

This sequence belongs to the RapZ-like family.

Displays ATPase and GTPase activities. The sequence is that of Nucleotide-binding protein Hhal_2130 from Halorhodospira halophila (strain DSM 244 / SL1) (Ectothiorhodospira halophila (strain DSM 244 / SL1)).